The sequence spans 241 residues: GTP cyclohydrolase 1 (241 aa).

Positions 1 to 11 (MEKPRGVRCTN) are excised as a propeptide. The segment at 1-58 (MEKPRGVRCTNGFPERELPRPGASRPAEKSRPPEAKGAQPADAWKAGRPRSEEDNELN) is disordered. Phosphoserine occurs at positions 51 and 72. Zn(2+) is bound by residues C132, H135, and C203.

The protein belongs to the GTP cyclohydrolase I family. In terms of assembly, toroid-shaped homodecamer, composed of two pentamers of five dimers. Interacts with AHSA1 and GCHFR/GFRP. Post-translationally, phosphorylated.

The protein resides in the cytoplasm. It localises to the nucleus. The enzyme catalyses GTP + H2O = 7,8-dihydroneopterin 3'-triphosphate + formate + H(+). The protein operates within cofactor biosynthesis; 7,8-dihydroneopterin triphosphate biosynthesis; 7,8-dihydroneopterin triphosphate from GTP: step 1/1. GTP shows a positive allosteric effect, and tetrahydrobiopterin inhibits the enzyme activity. Zinc is required for catalytic activity. Inhibited by Mg(2+). May positively regulate nitric oxide synthesis in endothelial cells. May be involved in dopamine synthesis. May modify pain sensitivity and persistence. The polypeptide is GTP cyclohydrolase 1 (Gch1) (Rattus norvegicus (Rat)).